The sequence spans 315 residues: Putative serine/threonine-protein phosphatase PP2A-4 catalytic subunit (315 aa).

Mn(2+)-binding residues include aspartate 63, histidine 65, aspartate 91, and asparagine 123. The active-site Proton donor is histidine 124. Histidine 173 and histidine 247 together coordinate Mn(2+).

Belongs to the PPP phosphatase family. PP-2A subfamily. Mn(2+) serves as cofactor.

Its subcellular location is the cytoplasm. The enzyme catalyses O-phospho-L-seryl-[protein] + H2O = L-seryl-[protein] + phosphate. It carries out the reaction O-phospho-L-threonyl-[protein] + H2O = L-threonyl-[protein] + phosphate. The chain is Putative serine/threonine-protein phosphatase PP2A-4 catalytic subunit (PP2A4) from Oryza sativa subsp. indica (Rice).